Here is a 79-residue protein sequence, read N- to C-terminus: Protein VdcD (79 aa).

Involved in the non-oxidative decarboxylation and detoxification of phenolic derivatives under both aerobic and anaerobic conditions, however the precise biochemical function of VdcD in metabolism of phenolic acid is unknown. This chain is Protein VdcD, found in Streptomyces sp. (strain D7).